An 843-amino-acid chain; its full sequence is Taste receptor type 1 member 2 (843 aa).

An N-terminal signal peptide occupies residues 1–19 (MGPQARTLCLLSLLLHVLP). At 20-570 (KPGKLVENSD…TFLEWHEVPT (551 aa)) the chain is on the extracellular side. Residues N87, N296, N316, N355, N372, N432, N484, N491, and N531 are each glycosylated (N-linked (GlcNAc...) asparagine). The helical transmembrane segment at 571–591 (IVVAILAALGFFSTLAILFIF) threads the bilayer. Residues 592–606 (WRHFQTPMVRSAGGP) lie on the Cytoplasmic side of the membrane. A helical transmembrane segment spans residues 607 to 627 (MCFLMLVPLLLAFGMVPVYVG). The Extracellular portion of the chain corresponds to 628–642 (PPTVFSCFCRQAFFT). A helical membrane pass occupies residues 643–663 (VCFSICLSCITVRSFQIVCVF). Residues 664–682 (KMARRLPSAYSFWMRYHGP) lie on the Cytoplasmic side of the membrane. Residues 683–703 (YVFVAFITAIKVALVVGNMLA) form a helical membrane-spanning segment. Over 704–731 (TTINPIGRTDPDDPNIMILSCHPNYRNG) the chain is Extracellular. The chain crosses the membrane as a helical span at residues 732–752 (LLFNTSMDLLLSVLGFSFAYM). Over 753–764 (GKELPTNYNEAK) the chain is Cytoplasmic. The chain crosses the membrane as a helical span at residues 765–785 (FITLSMTFSFTSSISLCTFMS). Residues 786 to 789 (VHDG) are Extracellular-facing. Residues 790–810 (VLVTIMDLLVTVLNFLAIGLG) form a helical membrane-spanning segment. The Cytoplasmic portion of the chain corresponds to 811 to 843 (YFGPKCYMILFYPERNTSAYFNSMIQGYTMRKS).

The protein belongs to the G-protein coupled receptor 3 family. TAS1R subfamily. Forms heterodimers with TAS1R3. In terms of tissue distribution, abundantly expressed in circumvallate and foliate papillae.

Its subcellular location is the cell membrane. Its function is as follows. Putative taste receptor. TAS1R2/TAS1R3 recognizes diverse natural and synthetic sweeteners. The chain is Taste receptor type 1 member 2 (Tas1r2) from Rattus norvegicus (Rat).